A 62-amino-acid polypeptide reads, in one-letter code: UPF0370 protein plu2724 (62 aa).

The chain crosses the membrane as a helical span at residues 3-23 (WLADYWWIILILLVGVLLNAI). The tract at residues 36–62 (DNKPELPPHRDLNSKWDDEDDWPQKKP) is disordered.

Belongs to the UPF0370 family.

The protein localises to the cell membrane. The polypeptide is UPF0370 protein plu2724 (Photorhabdus laumondii subsp. laumondii (strain DSM 15139 / CIP 105565 / TT01) (Photorhabdus luminescens subsp. laumondii)).